Here is a 100-residue protein sequence, read N- to C-terminus: Urease subunit gamma (100 aa).

It belongs to the urease gamma subunit family. As to quaternary structure, heterotrimer of UreA (gamma), UreB (beta) and UreC (alpha) subunits. Three heterotrimers associate to form the active enzyme.

The protein localises to the cytoplasm. The enzyme catalyses urea + 2 H2O + H(+) = hydrogencarbonate + 2 NH4(+). It participates in nitrogen metabolism; urea degradation; CO(2) and NH(3) from urea (urease route): step 1/1. The chain is Urease subunit gamma from Nocardia farcinica (strain IFM 10152).